The sequence spans 98 residues: DNA-binding protein Fis (98 aa).

A DNA-binding region (H-T-H motif) is located at residues 74 to 93 (QTRAATMMGINRGTLRKKLK).

Belongs to the transcriptional regulatory Fis family. In terms of assembly, homodimer.

Activates ribosomal RNA transcription. Plays a direct role in upstream activation of rRNA promoters. The chain is DNA-binding protein Fis from Vibrio atlanticus (strain LGP32) (Vibrio splendidus (strain Mel32)).